Consider the following 48-residue polypeptide: Large ribosomal subunit protein bL33A (48 aa).

It belongs to the bacterial ribosomal protein bL33 family.

The sequence is that of Large ribosomal subunit protein bL33A from Streptococcus pyogenes serotype M28 (strain MGAS6180).